The chain runs to 915 residues: Metabotropic glutamate receptor 7 (915 aa).

Positions 1–34 are cleaved as a signal peptide; it reads MVQLRKLLRVLTLMKFPCCVLEVLLCALAAAARG. At 35-590 the chain is on the extracellular side; sequence QEMYAPHSIR…IIKLEWHSPW (556 aa). An intrachain disulfide couples cysteine 67 to cysteine 109. The N-linked (GlcNAc...) asparagine glycan is linked to asparagine 98. Residues serine 159, 180–182, tyrosine 230, and aspartate 314 contribute to the L-glutamate site; that span reads AST. Disulfide bonds link cysteine 249–cysteine 541, cysteine 374–cysteine 390, cysteine 430–cysteine 437, cysteine 523–cysteine 542, cysteine 527–cysteine 545, cysteine 548–cysteine 560, and cysteine 563–cysteine 576. Lysine 407 serves as a coordination point for L-glutamate. N-linked (GlcNAc...) asparagine glycans are attached at residues asparagine 458 and asparagine 486. Asparagine 572 carries an N-linked (GlcNAc...) asparagine glycan. A helical membrane pass occupies residues 591 to 615; sequence AVIPVFLAMLGIIATIFVMATFIRY. Over 616–627 the chain is Cytoplasmic; the sequence is NDTPIVRASGRE. The helical transmembrane segment at 628-648 threads the bilayer; that stretch reads LSYVLLTGIFLCYIITFLMIA. The Extracellular segment spans residues 649–654; sequence KPDVAV. The chain crosses the membrane as a helical span at residues 655 to 675; it reads CSFRRVFLGLGMCISYAALLT. At 676 to 702 the chain is on the cytoplasmic side; it reads KTNRIYRIFEQGKKSVTAPRLISPTSQ. A helical membrane pass occupies residues 703 to 723; it reads LAITSSLISVQLLGVFIWFGV. The Extracellular portion of the chain corresponds to 724–753; that stretch reads DPPNIIIDYDEHKTMNPEQARGVLKCDITD. A helical transmembrane segment spans residues 754–775; that stretch reads LQIICSLGYSILLMVTCTVYAI. At 776 to 788 the chain is on the cytoplasmic side; the sequence is KTRGVPENFNEAK. A helical membrane pass occupies residues 789–810; that stretch reads PIGFTMYTTCIVWLAFIPIFFG. Topologically, residues 811–825 are extracellular; sequence TAQSAEKLYIQTTTL. The chain crosses the membrane as a helical span at residues 826 to 850; that stretch reads TISMNLSASVALGMLYMPKVYIIIF. Residues 851-915 are Cytoplasmic-facing; that stretch reads HPELNVQKRK…KYVSYNNLVI (65 aa). A disordered region spans residues 874-895; sequence SRLSHKPSDRPNGEAKTELCEN. Basic and acidic residues predominate over residues 879–892; that stretch reads KPSDRPNGEAKTEL. Position 900 is a phosphoserine (serine 900).

It belongs to the G-protein coupled receptor 3 family. Homodimer. Interacts with PICK1. N-glycosylated. As to expression, expressed in many areas of the brain, especially in the cerebral cortex, hippocampus, and cerebellum. Expression of GRM7 isoforms in non-neuronal tissues appears to be restricted to isoform 3 and isoform 4.

It is found in the cell membrane. In terms of biological role, G-protein coupled receptor activated by glutamate that regulates axon outgrowth through the MAPK-cAMP-PKA signaling pathway during neuronal development. Ligand binding causes a conformation change that triggers signaling via guanine nucleotide-binding proteins (G proteins) and modulates the activity of downstream effectors, such as adenylate cyclase that it inhibits. The polypeptide is Metabotropic glutamate receptor 7 (GRM7) (Homo sapiens (Human)).